A 112-amino-acid polypeptide reads, in one-letter code: UPF0060 membrane protein CMS0846 (112 aa).

4 helical membrane-spanning segments follow: residues 6–26 (VILF…IWQA), 32–52 (PFWW…IATL), 61–81 (ILAA…TVVD), and 87–107 (RWDV…MAAP).

The protein belongs to the UPF0060 family.

Its subcellular location is the cell membrane. The polypeptide is UPF0060 membrane protein CMS0846 (Clavibacter sepedonicus (Clavibacter michiganensis subsp. sepedonicus)).